The primary structure comprises 425 residues: Serine--tRNA ligase (425 aa).

Disordered regions lie at residues 43-68 (QRSS…GSDP) and 108-131 (LPNL…RHCW). Over residues 117–131 (PEGRDENDNQERHCW) the composition is skewed to basic and acidic residues. 233–235 (TAE) is a binding site for L-serine. Residue 264–266 (RRE) participates in ATP binding. E287 serves as a coordination point for L-serine. Residue 351–354 (EISS) coordinates ATP. Residue S385 participates in L-serine binding.

This sequence belongs to the class-II aminoacyl-tRNA synthetase family. Type-1 seryl-tRNA synthetase subfamily. As to quaternary structure, homodimer. The tRNA molecule binds across the dimer.

The protein localises to the cytoplasm. The enzyme catalyses tRNA(Ser) + L-serine + ATP = L-seryl-tRNA(Ser) + AMP + diphosphate + H(+). It catalyses the reaction tRNA(Sec) + L-serine + ATP = L-seryl-tRNA(Sec) + AMP + diphosphate + H(+). The protein operates within aminoacyl-tRNA biosynthesis; selenocysteinyl-tRNA(Sec) biosynthesis; L-seryl-tRNA(Sec) from L-serine and tRNA(Sec): step 1/1. In terms of biological role, catalyzes the attachment of serine to tRNA(Ser). Is also able to aminoacylate tRNA(Sec) with serine, to form the misacylated tRNA L-seryl-tRNA(Sec), which will be further converted into selenocysteinyl-tRNA(Sec). This chain is Serine--tRNA ligase, found in Prochlorococcus marinus (strain MIT 9303).